The following is a 513-amino-acid chain: uncharacterized protein (513 aa).

The next 13 membrane-spanning stretches (helical) occupy residues 3 to 23 (MTAF…TYFA), 47 to 67 (LAIA…GMIA), 71 to 91 (FDGF…LYIV), 129 to 149 (TFYM…LLGL), 153 to 173 (AAVL…GMIA), 177 to 197 (VQII…IIVF), 233 to 253 (ETLS…HILI), 273 to 293 (WIIG…AAFV), 320 to 340 (FLFA…VTGL), 374 to 394 (ASVA…SLNV), 395 to 415 (AFLV…LIVF), 424 to 444 (ASGA…LVSM), and 462 to 482 (LIPL…GAWL).

This sequence belongs to the sodium:solute symporter (SSF) (TC 2.A.21) family.

Its subcellular location is the cell membrane. This is an uncharacterized protein from Bacillus subtilis (strain 168).